Reading from the N-terminus, the 334-residue chain is GTPase Obg (334 aa).

Residues 4-162 (FDFIDEVKKY…GWIKLELKLL (159 aa)) enclose the Obg domain. Residues 163 to 330 (AEVGLVGFPN…FKDKIWKLLH (168 aa)) form the OBG-type G domain. Residues 169 to 176 (GFPNAGKS), 194 to 198 (FTTLV), 216 to 219 (DMPG), 284 to 287 (SKLD), and 311 to 313 (SSV) each bind GTP. Positions 176 and 196 each coordinate Mg(2+).

It belongs to the TRAFAC class OBG-HflX-like GTPase superfamily. OBG GTPase family. As to quaternary structure, monomer. Requires Mg(2+) as cofactor.

Its subcellular location is the cytoplasm. Its function is as follows. An essential GTPase which binds GTP, GDP and possibly (p)ppGpp with moderate affinity, with high nucleotide exchange rates and a fairly low GTP hydrolysis rate. Plays a role in control of the cell cycle, stress response, ribosome biogenesis and in those bacteria that undergo differentiation, in morphogenesis control. This is GTPase Obg from Amoebophilus asiaticus (strain 5a2).